A 414-amino-acid chain; its full sequence is Ribulose bisphosphate carboxylase large chain (414 aa).

Positions 102 and 152 each coordinate substrate. The active-site Proton acceptor is the lysine 154. Residue lysine 156 coordinates substrate. Positions 180, 182, and 183 each coordinate Mg(2+). Lysine 180 is subject to N6-carboxylysine. Histidine 273 (proton acceptor) is an active-site residue. Residues arginine 274, histidine 306, and serine 358 each contribute to the substrate site.

This sequence belongs to the RuBisCO large chain family. Type I subfamily. Heterohexadecamer of 8 large chains and 8 small chains; disulfide-linked. The disulfide link is formed within the large subunit homodimers. Mg(2+) is required as a cofactor. In terms of processing, the disulfide bond which can form in the large chain dimeric partners within the hexadecamer appears to be associated with oxidative stress and protein turnover.

It localises to the plastid. The protein resides in the chloroplast. The enzyme catalyses 2 (2R)-3-phosphoglycerate + 2 H(+) = D-ribulose 1,5-bisphosphate + CO2 + H2O. The catalysed reaction is D-ribulose 1,5-bisphosphate + O2 = 2-phosphoglycolate + (2R)-3-phosphoglycerate + 2 H(+). In terms of biological role, ruBisCO catalyzes two reactions: the carboxylation of D-ribulose 1,5-bisphosphate, the primary event in carbon dioxide fixation, as well as the oxidative fragmentation of the pentose substrate in the photorespiration process. Both reactions occur simultaneously and in competition at the same active site. In Antrophyum reticulatum (Ox-tongue fern), this protein is Ribulose bisphosphate carboxylase large chain (rbcL).